The sequence spans 920 residues: Rho GTPase-activating protein REN1 (920 aa).

The segment covering 1–10 (MANKNAESSS) has biased composition (polar residues). Positions 1–64 (MANKNAESSS…SRGGNTVFKS (64 aa)) are disordered. The span at 17–31 (QPNQQQQQQPPIANE) shows a compositional bias: low complexity. A compositionally biased stretch (polar residues) spans 45–64 (PAQSGNTDSRSRGGNTVFKS). Residues 60 to 167 (TVFKSGPLSI…WKAALENALT (108 aa)) form the PH domain. The Rho-GAP domain maps to 213-412 (LALEDVDGAP…TLLEEYESIF (200 aa)). Disordered stretches follow at residues 417 to 592 (LSPG…NLSM), 719 to 825 (RLGH…ALSK), and 837 to 920 (RSQI…TFSR). Over residues 434 to 463 (EGSDDEEYDDDDDGSQGSEDYTDEEEDLEN) the composition is skewed to acidic residues. The span at 464 to 473 (ESNGSYSESA) shows a compositional bias: polar residues. 3 stretches are compositionally biased toward basic and acidic residues: residues 475-491 (SEDK…HKIN), 499-509 (KSPKRSKEPKK), and 520-532 (PRHD…EDIV). Positions 555-568 (SSTSDVASDTQKPS) are enriched in polar residues. Residues 577 to 586 (SKRHWGRTPG) show a composition bias toward basic residues. Residues 598-728 (SVEVDEDNAD…RLGHHDGKAS (131 aa)) adopt a coiled-coil conformation. Basic and acidic residues-rich tracts occupy residues 734–768 (ASKE…RSTS) and 776–788 (RENE…DSRS). Low complexity predominate over residues 814–825 (EGSTTTTSALSK). Composition is skewed to polar residues over residues 854 to 864 (GQPSPTSGQNR) and 872 to 885 (GSGS…SKLQ). Residues 889-903 (ILDRGRSENGGDRGR) are compositionally biased toward basic and acidic residues. Residues 910–920 (HPNTTPRTFSR) are compositionally biased toward polar residues.

Interacts with ARAC11/ROP1. In terms of tissue distribution, expressed in pollen and pollen tubes.

It localises to the cell membrane. In terms of biological role, acts as a GTPase activator for the Rac-type GTPase by converting it to an inactive GDP-bound state. Maintains the global inactivation of ARAC11/ROP1 at the apex in pollen tubes in order to regulate the polar cell growth. This chain is Rho GTPase-activating protein REN1 (REN1), found in Arabidopsis thaliana (Mouse-ear cress).